The following is a 1157-amino-acid chain: Folliculin-interacting protein 1 (1157 aa).

The uDENN FNIP1/2-type domain occupies 37–467 (FDPSQIRLIV…TVMPNGQPPI (431 aa)). Disordered stretches follow at residues 92 to 120 (PGGDSSSSLDSSINSSSSFSDAKEQCPKY), 616 to 665 (SQQE…TKVE), 769 to 796 (SPPTAEEGVSADQNCEAKQTVEDQNRDC), and 904 to 955 (VPHG…NYYG). A compositionally biased stretch (low complexity) spans 95 to 111 (DSSSSLDSSINSSSSFS). Positions 475–1083 (SSQSVDMLAK…VSNLLHSTLQ (609 aa)) constitute a cDENN FNIP1/2-type domain. The segment covering 651 to 664 (ADGHQPRTCQDTKV) has biased composition (basic and acidic residues). The segment covering 904-916 (VPHGDRENAEKKV) has biased composition (basic and acidic residues). The 56-residue stretch at 1093-1148 (FCVMHLEDRLQELYFKSKMLSEYLKGQMRVHVKELGVVLGIESSDLPLLAAVASTH) folds into the dDENN FNIP1/2-type domain.

The protein belongs to the FNIP family. As to quaternary structure, homodimer and homomultimer. Heterodimer and heteromultimer with FNIP2. Component of the lysosomal folliculin complex (LFC).

The protein localises to the lysosome membrane. It is found in the cytoplasm. The protein resides in the cytosol. Functionally, binding partner of the GTPase-activating protein FLCN: involved in the cellular response to amino acid availability by regulating the non-canonical mTORC1 signaling cascade controlling the MiT/TFE factors TFEB and TFE3. Required to promote FLCN recruitment to lysosomes and interaction with Rag GTPases, leading to activation of the non-canonical mTORC1 signaling. In low-amino acid conditions, component of the lysosomal folliculin complex (LFC) on the membrane of lysosomes, which inhibits the GTPase-activating activity of FLCN, thereby inactivating mTORC1 and promoting nuclear translocation of TFEB and TFE3. Upon amino acid restimulation, disassembly of the LFC complex liberates the GTPase-activating activity of FLCN, leading to activation of mTORC1 and subsequent inactivation of TFEB and TFE3. In addition to its role in mTORC1 signaling, also acts as a co-chaperone of HSP90AA1/Hsp90: inhibits the ATPase activity of HSP90AA1/Hsp90, leading to activate both kinase and non-kinase client proteins of HSP90AA1/Hsp90. Acts as a scaffold to load client protein FLCN onto HSP90AA1/Hsp90. The chain is Folliculin-interacting protein 1 from Gallus gallus (Chicken).